The following is a 198-amino-acid chain: Glycerol-3-phosphate acyltransferase 3 (198 aa).

Helical transmembrane passes span 4-24 (TYLL…LVVG), 71-91 (LPMV…AVLG), 113-133 (LLCY…TLLF), and 147-167 (VVAV…AMCL).

The protein belongs to the PlsY family. As to quaternary structure, probably interacts with PlsX.

The protein localises to the cell membrane. The enzyme catalyses an acyl phosphate + sn-glycerol 3-phosphate = a 1-acyl-sn-glycero-3-phosphate + phosphate. The protein operates within lipid metabolism; phospholipid metabolism. Catalyzes the transfer of an acyl group from acyl-phosphate (acyl-PO(4)) to glycerol-3-phosphate (G3P) to form lysophosphatidic acid (LPA). This enzyme utilizes acyl-phosphate as fatty acyl donor, but not acyl-CoA or acyl-ACP. This Bacillus anthracis protein is Glycerol-3-phosphate acyltransferase 3.